A 1059-amino-acid polypeptide reads, in one-letter code: Putative ATP-dependent RNA helicase BoYb (1059 aa).

The Q motif motif lies at 54-82; the sequence is RRFAEVSLLPDILETMRNLGLNRLLRLQS. In terms of domain architecture, Helicase ATP-binding spans 87-284; the sequence is HLAGGSGHGA…RAVNDKPALV (198 aa). Position 100–107 (100–107) interacts with ATP; it reads GSPASGRT. The DEAD box signature appears at 230–233; sequence DDVD. One can recognise a Tudor domain in the interval 575 to 639; the sequence is PPVAGAICMY…GKLFECPEAL (65 aa). Residues 756-787 are disordered; sequence VQDSKEKANSKPHEKMKGKMTDQPAKLQSQPP. A compositionally biased stretch (basic and acidic residues) spans 757–775; sequence QDSKEKANSKPHEKMKGKM.

Its subcellular location is the cytoplasm. The enzyme catalyses ATP + H2O = ADP + phosphate + H(+). In terms of biological role, involved in primary piRNA biogenesis in germline cells. This chain is Putative ATP-dependent RNA helicase BoYb (BoYb), found in Drosophila melanogaster (Fruit fly).